Consider the following 414-residue polypeptide: D-mannose isomerase (414 aa).

Active-site proton donor/acceptor residues include H255 and H390.

It belongs to the N-acylglucosamine 2-epimerase family. Monomer.

It catalyses the reaction D-mannose = D-fructose. Its activity is regulated as follows. Strongly inhibited by Ag(2+), Cu(2+) and cetyltrimethyl ammonium bromide (CTAB). Catalyzes the reversible isomerization of D-mannose to D-fructose. Shows high specific activity towards mannose and fructose, and has no detectable activity towards other monosaccharides and disaccharides. The chain is D-mannose isomerase from Pseudomonas cannabina pv. alisalensis.